Reading from the N-terminus, the 304-residue chain is Non-specific ribonucleoside hydrolase RihC (304 aa).

The active site involves His233.

The protein belongs to the IUNH family. RihC subfamily.

Its function is as follows. Hydrolyzes both purine and pyrimidine ribonucleosides with a broad-substrate specificity. The chain is Non-specific ribonucleoside hydrolase RihC from Escherichia coli O8 (strain IAI1).